The following is a 496-amino-acid chain: Aspartyl/glutamyl-tRNA(Asn/Gln) amidotransferase subunit B (496 aa).

It belongs to the GatB/GatE family. GatB subfamily. In terms of assembly, heterotrimer of A, B and C subunits.

The enzyme catalyses L-glutamyl-tRNA(Gln) + L-glutamine + ATP + H2O = L-glutaminyl-tRNA(Gln) + L-glutamate + ADP + phosphate + H(+). It carries out the reaction L-aspartyl-tRNA(Asn) + L-glutamine + ATP + H2O = L-asparaginyl-tRNA(Asn) + L-glutamate + ADP + phosphate + 2 H(+). Its function is as follows. Allows the formation of correctly charged Asn-tRNA(Asn) or Gln-tRNA(Gln) through the transamidation of misacylated Asp-tRNA(Asn) or Glu-tRNA(Gln) in organisms which lack either or both of asparaginyl-tRNA or glutaminyl-tRNA synthetases. The reaction takes place in the presence of glutamine and ATP through an activated phospho-Asp-tRNA(Asn) or phospho-Glu-tRNA(Gln). The sequence is that of Aspartyl/glutamyl-tRNA(Asn/Gln) amidotransferase subunit B from Xanthobacter autotrophicus (strain ATCC BAA-1158 / Py2).